Consider the following 167-residue polypeptide: Telethonin (167 aa).

A Phosphoserine modification is found at serine 39. Residues 142-167 form a disordered region; it reads PVVPVSKPGPLRRTLSRSMSQEAQRG. The segment covering 157–167 has biased composition (polar residues); that stretch reads SRSMSQEAQRG.

In terms of assembly, interacts with MYOZ1, MYOZ2 and MYOZ3. Interacts with CSRP3. Interacts directly with the N-terminal Ig-like domains of 2 titin (TTN) molecules. Interacts with ANKRD2; the interaction is direct.

The protein resides in the cytoplasm. It is found in the myofibril. Its subcellular location is the sarcomere. Functionally, muscle assembly regulating factor. Mediates the antiparallel assembly of titin (TTN) molecules at the sarcomeric Z-disk. The protein is Telethonin (Tcap) of Mus musculus (Mouse).